The sequence spans 117 residues: Cuticle protein CP1243 (117 aa).

4 repeat units span residues 1-17 (NYGE…LVQF), 26-43 (AEIG…HVQF), 67-84 (QPYG…NRQF), and 93-110 (VLVG…NVQF).

Calcified shell.

In Cancer pagurus (Rock crab), this protein is Cuticle protein CP1243.